Reading from the N-terminus, the 536-residue chain is Butyrophilin-like protein 9 (536 aa).

The signal sequence occupies residues 1–35 (MADFSVFLGFLKQIPRCLSIFFTYLLFLQLWEVNS). 2 consecutive Ig-like V-type domains span residues 36-149 (DKVW…WELE) and 152-241 (GSGS…KEFV). Over 36 to 257 (DKVWVLGPEE…FLPRMSPWKK (222 aa)) the chain is Extracellular. A disulfide bond links Cys59 and Cys133. N-linked (GlcNAc...) asparagine glycosylation is found at Asn102, Asn139, and Asn224. Cys173 and Cys227 are disulfide-bonded. The chain crosses the membrane as a helical span at residues 258 to 278 (AFVGTLVVLPLSLIVLTMLAL). The Cytoplasmic portion of the chain corresponds to 279-536 (RYFYKLRSFQ…PAWAVNEAVS (258 aa)). In terms of domain architecture, B30.2/SPRY spans 307–506 (DWRRSEGQAE…MTICSLPVRG (200 aa)).

This sequence belongs to the immunoglobulin superfamily. BTN/MOG family.

It is found in the membrane. The sequence is that of Butyrophilin-like protein 9 (Btnl9) from Mus musculus (Mouse).